The sequence spans 590 residues: Polypeptide N-acetylgalactosaminyltransferase 8 (590 aa).

At 1-11 (MCLDIWRHKKK) the chain is on the cytoplasmic side. Residues 12–31 (VLPLLLLMAIGSIIYYLYTL) form a helical; Signal-anchor for type II membrane protein membrane-spanning segment. The Lumenal portion of the chain corresponds to 32–590 (KLEGERDESA…QHFWDNVKTQ (559 aa)). An N-linked (GlcNAc...) asparagine glycan is attached at N77. 5 disulfides stabilise this stretch: C117–C345, C336–C419, C459–C475, C502–C517, and C546–C561. A catalytic subdomain A region spans residues 127 to 236 (LPSVSVVITY…KGWLEPLIAP (110 aa)). D168 serves as a coordination point for substrate. D220 provides a ligand contact to Mn(2+). S221 lines the substrate pocket. H222 is a Mn(2+) binding site. N-linked (GlcNAc...) asparagine glycosylation is present at N241. Positions 291-353 (PHKNPIMNGG…PCSRVGHLFR (63 aa)) are catalytic subdomain B. Position 322 (W322) interacts with substrate. Position 350 (H350) interacts with Mn(2+). Position 353 (R353) interacts with substrate. The Ricin B-type lectin domain maps to 446 to 573 (ASGVLQSISS…KNHKQQWKFG (128 aa)).

It belongs to the glycosyltransferase 2 family. GalNAc-T subfamily. It depends on Mn(2+) as a cofactor. As to expression, expressed in developing oocytes and egg chambers. During embryonic stages 9-11, expressed in the primordium of the foregut, midgut and hindgut. During embryonic stages 12-13, expressed in the posterior midgut and hindgut. During embryonic stages 14-15, expression continues in the hindgut. No expression detected during embryonic stages 16-17 or in third instar larvae imaginal disks.

The protein localises to the golgi apparatus membrane. The enzyme catalyses L-seryl-[protein] + UDP-N-acetyl-alpha-D-galactosamine = a 3-O-[N-acetyl-alpha-D-galactosaminyl]-L-seryl-[protein] + UDP + H(+). It catalyses the reaction L-threonyl-[protein] + UDP-N-acetyl-alpha-D-galactosamine = a 3-O-[N-acetyl-alpha-D-galactosaminyl]-L-threonyl-[protein] + UDP + H(+). Its pathway is protein modification; protein glycosylation. Functionally, catalyzes the initial reaction in O-linked oligosaccharide biosynthesis, the transfer of an N-acetyl-D-galactosamine residue to a serine or threonine residue on the protein receptor. It can both act as a peptide transferase that transfers GalNAc onto unmodified peptide substrates, and as a glycopeptide transferase that requires the prior addition of a GalNAc on a peptide before adding additional GalNAc moieties. Prefers both EA2 and the diglycosylated Muc5AC-3/13 as substrates, albeit at very low levels fro Muc5AC-3/13. The polypeptide is Polypeptide N-acetylgalactosaminyltransferase 8 (Drosophila melanogaster (Fruit fly)).